Consider the following 142-residue polypeptide: Small ribosomal subunit protein bS18m (142 aa).

It belongs to the bacterial ribosomal protein bS18 family. In terms of assembly, component of the mitochondrial small ribosomal subunit (mt-SSU). Mature mammalian 55S mitochondrial ribosomes consist of a small (28S) and a large (39S) subunit. The 28S small subunit contains a 12S ribosomal RNA (12S mt-rRNA) and 30 different proteins. The 39S large subunit contains a 16S rRNA (16S mt-rRNA), a copy of mitochondrial valine transfer RNA (mt-tRNA(Val)), which plays an integral structural role, and 52 different proteins. bS18m has a zinc binding site.

It localises to the mitochondrion. The sequence is that of Small ribosomal subunit protein bS18m (MRPS18C) from Homo sapiens (Human).